The following is a 621-amino-acid chain: Very-long-chain aldehyde decarbonylase GL1-5 (621 aa).

5 consecutive transmembrane segments (helical) span residues 99–119, 126–146, 186–206, 224–244, and 332–352; these read IILS…GQHL, GAGL…YWFH, LLFS…IIAF, FELV…LMYT, and MWPL…SFTV. The region spanning 138–272 is the Fatty acid hydroxylase domain; that stretch reads VEFLYYWFHR…MPFYDYIYNT (135 aa).

It belongs to the sterol desaturase family. As to quaternary structure, homodimer. As to expression, expressed in panicles, developing spikelets, stamens and hulls and, at low levels, in roots, developing seeds, flag leaves and seedling shoots. Strongly expressed in the epidermal cells of anthers.

The protein localises to the endoplasmic reticulum membrane. The catalysed reaction is a long-chain fatty aldehyde + 2 NADPH + O2 + H(+) = a long-chain alkane + formate + 2 NADP(+) + H2O. In terms of biological role, aldehyde decarbonylase involved in the conversion of aldehydes to alkanes. Core component of a very-long-chain alkane synthesis complex. Required for the biosynthesis of very-long-chain fatty acids (including polyesters) in cuticles, anther tapetum and pollen exine. This chain is Very-long-chain aldehyde decarbonylase GL1-5, found in Oryza sativa subsp. japonica (Rice).